Reading from the N-terminus, the 415-residue chain is MAAAVAGGGEEGEELLLLSAVEAGSFGGGGDGGGAGAAAEKSWRLNFDGFRPPEVQQERRPPRGLHHHCLGVLSQGPEDVVAEYYQQQVEMLEGFNEMDTLTDRGFLPGMSKEEREKVARSETLAIRLSNIANMVLFAAKVYASVRSGSLAIIASTLDSLLDLLSGFILWFTAFSMQTPNPYRYPIGKKRMQPLGILVFASVMATLGLQIILESVRSLLSDGDEFSLTKEQEKWVVDIMLAVTLVKLALVLYCRTFTNEIVKAYAQDHFFDVITNMIGLVAALLATYIEGWIDPVGAIILAIYTIRTWSMTVLENVHSLVGQSASPEYLQKLTYLCWNHHKAVRHIDTVRAYTFGSHYFVEVDIVLPSSMPLQEAHDIGEALQEKLERLPEIERAFVHLDYEFTHRPEHALSHEK.

Topologically, residues 1 to 124 (MAAAVAGGGE…REKVARSETL (124 aa)) are cytoplasmic. Residues 125-145 (AIRLSNIANMVLFAAKVYASV) form a helical membrane-spanning segment. Over 146–150 (RSGSL) the chain is Vacuolar. The chain crosses the membrane as a helical span at residues 151–171 (AIIASTLDSLLDLLSGFILWF). Over 172-192 (TAFSMQTPNPYRYPIGKKRMQ) the chain is Cytoplasmic. A helical transmembrane segment spans residues 193–213 (PLGILVFASVMATLGLQIILE). The Vacuolar segment spans residues 214-232 (SVRSLLSDGDEFSLTKEQE). Residues 233–253 (KWVVDIMLAVTLVKLALVLYC) form a helical membrane-spanning segment. The Cytoplasmic portion of the chain corresponds to 254-268 (RTFTNEIVKAYAQDH). Residues 269-291 (FFDVITNMIGLVAALLATYIEGW) traverse the membrane as a helical segment. Residues 292 to 293 (ID) are Vacuolar-facing. Residues 294 to 313 (PVGAIILAIYTIRTWSMTVL) traverse the membrane as a helical segment. The Cytoplasmic segment spans residues 314–415 (ENVHSLVGQS…RPEHALSHEK (102 aa)).

The protein belongs to the cation diffusion facilitator (CDF) transporter (TC 2.A.4) family. SLC30A subfamily.

It localises to the vacuole membrane. Functionally, involved in sequestration of excess metal in the cytoplasm into vacuoles to maintain metal homeostasis. The polypeptide is Metal tolerance protein 5 (MTP5) (Oryza sativa subsp. japonica (Rice)).